A 243-amino-acid polypeptide reads, in one-letter code: Ubiquinone biosynthesis O-methyltransferase (243 aa).

S-adenosyl-L-methionine is bound by residues arginine 44, glycine 64, aspartate 85, and methionine 129.

Belongs to the methyltransferase superfamily. UbiG/COQ3 family.

The enzyme catalyses a 3-demethylubiquinol + S-adenosyl-L-methionine = a ubiquinol + S-adenosyl-L-homocysteine + H(+). It catalyses the reaction a 3-(all-trans-polyprenyl)benzene-1,2-diol + S-adenosyl-L-methionine = a 2-methoxy-6-(all-trans-polyprenyl)phenol + S-adenosyl-L-homocysteine + H(+). Its pathway is cofactor biosynthesis; ubiquinone biosynthesis. O-methyltransferase that catalyzes the 2 O-methylation steps in the ubiquinone biosynthetic pathway. The sequence is that of Ubiquinone biosynthesis O-methyltransferase from Erwinia tasmaniensis (strain DSM 17950 / CFBP 7177 / CIP 109463 / NCPPB 4357 / Et1/99).